The sequence spans 427 residues: Enolase (427 aa).

A (2R)-2-phosphoglycerate-binding site is contributed by Gln-163. Glu-205 acts as the Proton donor in catalysis. Mg(2+) contacts are provided by Asp-242, Glu-288, and Asp-315. (2R)-2-phosphoglycerate-binding residues include Lys-340, Arg-369, Ser-370, and Lys-391. Lys-340 (proton acceptor) is an active-site residue.

This sequence belongs to the enolase family. It depends on Mg(2+) as a cofactor.

It is found in the cytoplasm. Its subcellular location is the secreted. The protein localises to the cell surface. The catalysed reaction is (2R)-2-phosphoglycerate = phosphoenolpyruvate + H2O. Its pathway is carbohydrate degradation; glycolysis; pyruvate from D-glyceraldehyde 3-phosphate: step 4/5. Its function is as follows. Catalyzes the reversible conversion of 2-phosphoglycerate (2-PG) into phosphoenolpyruvate (PEP). It is essential for the degradation of carbohydrates via glycolysis. This chain is Enolase, found in Cytophaga hutchinsonii (strain ATCC 33406 / DSM 1761 / CIP 103989 / NBRC 15051 / NCIMB 9469 / D465).